We begin with the raw amino-acid sequence, 156 residues long: Small ribosomal subunit protein uS7 (156 aa).

Belongs to the universal ribosomal protein uS7 family. As to quaternary structure, part of the 30S ribosomal subunit. Contacts proteins S9 and S11.

One of the primary rRNA binding proteins, it binds directly to 16S rRNA where it nucleates assembly of the head domain of the 30S subunit. Is located at the subunit interface close to the decoding center, probably blocks exit of the E-site tRNA. The protein is Small ribosomal subunit protein uS7 of Rhodospirillum rubrum (strain ATCC 11170 / ATH 1.1.1 / DSM 467 / LMG 4362 / NCIMB 8255 / S1).